Consider the following 245-residue polypeptide: Glutathione S-transferase T1 (245 aa).

A GST N-terminal domain is found at 2–83 (MKLKVYADRM…YLSSAFPSVA (82 aa)). Glutathione is bound by residues 12-13 (SQ), 41-42 (QL), 54-55 (KV), and 67-68 (ES). Positions 90-233 (DLSKRAKIHS…KEGFQKRREM (144 aa)) constitute a GST C-terminal domain. The Microbody targeting signal motif lies at 243-245 (SKI).

This sequence belongs to the GST superfamily. Theta family.

It is found in the nucleus. It localises to the peroxisome. It catalyses the reaction RX + glutathione = an S-substituted glutathione + a halide anion + H(+). In vitro, possesses glutathione S-transferase activity toward 1-chloro-2,4-dinitrobenzene (CDNB) and p-nitrobenzyl chloride (pNBC), and glutathione peroxidase activity toward cumene hydroperoxide and linoleic acid-13-hydroperoxide. May be involved in the conjugation of reduced glutathione to a wide number of exogenous and endogenous hydrophobic electrophiles and have a detoxification role against certain herbicides. The chain is Glutathione S-transferase T1 (GSTT1) from Arabidopsis thaliana (Mouse-ear cress).